A 146-amino-acid chain; its full sequence is UPF0735 ACT domain-containing protein Cbei_1295 (146 aa).

Residues 70-145 (TYNIIFKNEK…NVEKVEFIGM (76 aa)) form the ACT domain.

The protein belongs to the UPF0735 family.

In Clostridium beijerinckii (strain ATCC 51743 / NCIMB 8052) (Clostridium acetobutylicum), this protein is UPF0735 ACT domain-containing protein Cbei_1295.